A 241-amino-acid chain; its full sequence is Octanoyltransferase (241 aa).

Residues 50–238 form the BPL/LPL catalytic domain; sequence KIAHEQVWLL…AFEQIFGPTI (189 aa). Substrate-binding positions include 89–96, 169–171, and 182–184; these read RGGEFTYH, AIG, and GIS. The active-site Acyl-thioester intermediate is Cys-200.

This sequence belongs to the LipB family.

The protein resides in the cytoplasm. It catalyses the reaction octanoyl-[ACP] + L-lysyl-[protein] = N(6)-octanoyl-L-lysyl-[protein] + holo-[ACP] + H(+). It functions in the pathway protein modification; protein lipoylation via endogenous pathway; protein N(6)-(lipoyl)lysine from octanoyl-[acyl-carrier-protein]: step 1/2. Functionally, catalyzes the transfer of endogenously produced octanoic acid from octanoyl-acyl-carrier-protein onto the lipoyl domains of lipoate-dependent enzymes. Lipoyl-ACP can also act as a substrate although octanoyl-ACP is likely to be the physiological substrate. This chain is Octanoyltransferase, found in Bartonella bacilliformis (strain ATCC 35685 / KC583 / Herrer 020/F12,63).